The sequence spans 188 residues: Peptidyl-tRNA hydrolase (188 aa).

TRNA is bound at residue F15. Residue H20 is the Proton acceptor of the active site. TRNA is bound by residues Y64, N66, and N112.

The protein belongs to the PTH family. As to quaternary structure, monomer.

Its subcellular location is the cytoplasm. The enzyme catalyses an N-acyl-L-alpha-aminoacyl-tRNA + H2O = an N-acyl-L-amino acid + a tRNA + H(+). Hydrolyzes ribosome-free peptidyl-tRNAs (with 1 or more amino acids incorporated), which drop off the ribosome during protein synthesis, or as a result of ribosome stalling. Functionally, catalyzes the release of premature peptidyl moieties from peptidyl-tRNA molecules trapped in stalled 50S ribosomal subunits, and thus maintains levels of free tRNAs and 50S ribosomes. In Borreliella burgdorferi (strain ATCC 35210 / DSM 4680 / CIP 102532 / B31) (Borrelia burgdorferi), this protein is Peptidyl-tRNA hydrolase.